A 1104-amino-acid polypeptide reads, in one-letter code: tRNA ligase 1 (1104 aa).

Lys-152 acts as the N6-AMP-lysine intermediate in catalysis.

This sequence belongs to the TRL1 family. The cofactor is Mg(2+). As to expression, mainly expressed in proliferating cells and tissues such as root meristems, the vasculature of developing plantlets, flowers and elongating tissue.

The protein localises to the nucleus. It localises to the cytoplasm. The enzyme catalyses ATP + (ribonucleotide)n-3'-hydroxyl + 5'-phospho-(ribonucleotide)m = (ribonucleotide)n+m + AMP + diphosphate.. Its activity is regulated as follows. Requires the presence of NTP, preferentially ATP rather than dATP, UTP, CTP and GTP, respectively, to mediate ribonucleotide 5'-phosphorylation. Essential component of stress-response pathways entailing repair of RNA breaks with 2',3'-cyclic phosphate and 5'-OH ends. Tri-functional enzyme that repairs RNA breaks with 2',3'-cyclic-PO(4) and 5'-OH ends. The ligation activity requires three sequential enzymatic activities: opening of the 2'3'-cyclic phosphodiester bond of the 5' half-tRNA leaving a 2'-phosphomonoester (CPDase activity), phosphorylation of the 5' terminus of the 3' half-tRNA in the presence of ATP (kinase activity) and ligation of the two tRNA halves in an ATP-dependent reaction (ligase activity). Deficient in transferring AMP to pRNA(OH) to form AppRNA(OH) but proficient at sealing pre-adenylylated AppRNA(OH). CPDase and kinase reactions are almost insensitive to RNA length, whereas the ligase activity decreases with shorter RNA size. Can also splice DNA ended by a single 3'-terminal ribonucleoside 2',3'-cyclic-PO(4). Binds to mRNA, mature and immature. Exhibits tRNA ligase activity in vitro. Required for the splicing of precursor tRNA molecules containing introns. Can circularize an intron cleaved from a pre-tRNA by splicing endonuclease in vitro. Seems not involved in unfolded protein response (UPR) in the endoplasmic reticulum. Involved in auxin signaling and polar transport during organ morphogenesis. This Arabidopsis thaliana (Mouse-ear cress) protein is tRNA ligase 1.